The chain runs to 166 residues: NADH-quinone oxidoreductase subunit E (166 aa).

4 residues coordinate [2Fe-2S] cluster: Cys92, Cys97, Cys133, and Cys137.

It belongs to the complex I 24 kDa subunit family. As to quaternary structure, composed of 13 different subunits. Subunits NuoCD, E, F, and G constitute the peripheral sector of the complex. Requires [2Fe-2S] cluster as cofactor.

The enzyme catalyses a quinone + NADH + 5 H(+)(in) = a quinol + NAD(+) + 4 H(+)(out). In terms of biological role, NDH-1 shuttles electrons from NADH, via FMN and iron-sulfur (Fe-S) centers, to quinones in the respiratory chain. The immediate electron acceptor for the enzyme in this species is believed to be ubiquinone. Couples the redox reaction to proton translocation (for every two electrons transferred, four hydrogen ions are translocated across the cytoplasmic membrane), and thus conserves the redox energy in a proton gradient. The protein is NADH-quinone oxidoreductase subunit E (nuoE) of Salmonella typhi.